An 88-amino-acid chain; its full sequence is Small ribosomal subunit protein uS15 (88 aa).

This sequence belongs to the universal ribosomal protein uS15 family. In terms of assembly, part of the 30S ribosomal subunit. Forms a bridge to the 50S subunit in the 70S ribosome, contacting the 23S rRNA.

In terms of biological role, one of the primary rRNA binding proteins, it binds directly to 16S rRNA where it helps nucleate assembly of the platform of the 30S subunit by binding and bridging several RNA helices of the 16S rRNA. Functionally, forms an intersubunit bridge (bridge B4) with the 23S rRNA of the 50S subunit in the ribosome. The polypeptide is Small ribosomal subunit protein uS15 (Variovorax paradoxus (strain S110)).